The sequence spans 227 residues: Cytochrome c oxidase subunit 2 (227 aa).

Topologically, residues 1-14 are mitochondrial intermembrane; that stretch reads MAYPMQLGFQDATS. Residues 15–45 traverse the membrane as a helical segment; sequence PIMEELLHFHDHTLMIVFLISSLVLYIISLM. The Mitochondrial matrix portion of the chain corresponds to 46–59; it reads LTTKLTHTSTMDAQ. Residues 60–87 traverse the membrane as a helical segment; that stretch reads EVETVWTILPAIILIMIALPSLRILYMM. Topologically, residues 88–227 are mitochondrial intermembrane; it reads DEINNPSLTV…YFEKWSASML (140 aa). Positions 161, 196, 198, 200, 204, and 207 each coordinate Cu cation. Residue E198 participates in Mg(2+) binding. Y218 bears the Phosphotyrosine mark.

Belongs to the cytochrome c oxidase subunit 2 family. Component of the cytochrome c oxidase (complex IV, CIV), a multisubunit enzyme composed of 14 subunits. The complex is composed of a catalytic core of 3 subunits MT-CO1, MT-CO2 and MT-CO3, encoded in the mitochondrial DNA, and 11 supernumerary subunits COX4I, COX5A, COX5B, COX6A, COX6B, COX6C, COX7A, COX7B, COX7C, COX8 and NDUFA4, which are encoded in the nuclear genome. The complex exists as a monomer or a dimer and forms supercomplexes (SCs) in the inner mitochondrial membrane with NADH-ubiquinone oxidoreductase (complex I, CI) and ubiquinol-cytochrome c oxidoreductase (cytochrome b-c1 complex, complex III, CIII), resulting in different assemblies (supercomplex SCI(1)III(2)IV(1) and megacomplex MCI(2)III(2)IV(2)). Found in a complex with TMEM177, COA6, COX18, COX20, SCO1 and SCO2. Interacts with TMEM177 in a COX20-dependent manner. Interacts with COX20. Interacts with COX16. Requires Cu cation as cofactor.

It is found in the mitochondrion inner membrane. It catalyses the reaction 4 Fe(II)-[cytochrome c] + O2 + 8 H(+)(in) = 4 Fe(III)-[cytochrome c] + 2 H2O + 4 H(+)(out). Functionally, component of the cytochrome c oxidase, the last enzyme in the mitochondrial electron transport chain which drives oxidative phosphorylation. The respiratory chain contains 3 multisubunit complexes succinate dehydrogenase (complex II, CII), ubiquinol-cytochrome c oxidoreductase (cytochrome b-c1 complex, complex III, CIII) and cytochrome c oxidase (complex IV, CIV), that cooperate to transfer electrons derived from NADH and succinate to molecular oxygen, creating an electrochemical gradient over the inner membrane that drives transmembrane transport and the ATP synthase. Cytochrome c oxidase is the component of the respiratory chain that catalyzes the reduction of oxygen to water. Electrons originating from reduced cytochrome c in the intermembrane space (IMS) are transferred via the dinuclear copper A center (CU(A)) of subunit 2 and heme A of subunit 1 to the active site in subunit 1, a binuclear center (BNC) formed by heme A3 and copper B (CU(B)). The BNC reduces molecular oxygen to 2 water molecules using 4 electrons from cytochrome c in the IMS and 4 protons from the mitochondrial matrix. The protein is Cytochrome c oxidase subunit 2 (MT-CO2) of Capra hircus (Goat).